The following is a 156-amino-acid chain: Small ribosomal subunit protein uS7 (156 aa).

This sequence belongs to the universal ribosomal protein uS7 family. Part of the 30S ribosomal subunit. Contacts proteins S9 and S11.

One of the primary rRNA binding proteins, it binds directly to 16S rRNA where it nucleates assembly of the head domain of the 30S subunit. Is located at the subunit interface close to the decoding center, probably blocks exit of the E-site tRNA. The sequence is that of Small ribosomal subunit protein uS7 from Syntrophobacter fumaroxidans (strain DSM 10017 / MPOB).